The primary structure comprises 88 residues: Kunitz-type U15-theraphotoxin-Hhn1f (88 aa).

The N-terminal stretch at 1-27 (MGTARFLRAVLLLSVLLMVTFPALLSA) is a signal peptide. Residues 28–33 (EHHDGR) constitute a propeptide that is removed on maturation. A BPTI/Kunitz inhibitor domain is found at 37 to 85 (CRLPSDSGDCLRFFEMWYFDGTTCTKFVYGGYGGNNNRFPTEKACMKRC). 2 cysteine pairs are disulfide-bonded: Cys-37/Cys-85 and Cys-60/Cys-81.

This sequence belongs to the venom Kunitz-type family. 03 (sub-Kunitz) subfamily. Expressed by the venom gland.

It is found in the secreted. In terms of biological role, serine protease inhibitor that inhibits trypsin at a molar ratio of 1:1. This Cyriopagopus hainanus (Chinese bird spider) protein is Kunitz-type U15-theraphotoxin-Hhn1f.